The chain runs to 133 residues: UPF0292 protein TGAM_1777 (133 aa).

The region spanning 20–100 is the Toprim domain; that stretch reads EGALIVEGLR…RVDVETRREL (81 aa). Residues E26, D69, and D71 each contribute to the Mg(2+) site.

Belongs to the UPF0292 family. The cofactor is Mg(2+).

This chain is UPF0292 protein TGAM_1777, found in Thermococcus gammatolerans (strain DSM 15229 / JCM 11827 / EJ3).